A 53-amino-acid chain; its full sequence is UPF0391 membrane protein PC1_0455 (53 aa).

Transmembrane regions (helical) follow at residues Trp4–Ala24 and Ala30–Phe47.

This sequence belongs to the UPF0391 family.

The protein resides in the cell membrane. In Pectobacterium carotovorum subsp. carotovorum (strain PC1), this protein is UPF0391 membrane protein PC1_0455.